The primary structure comprises 183 residues: tRNA-splicing endonuclease (183 aa).

Catalysis depends on residues Tyr120, His128, and Lys159.

Belongs to the tRNA-intron endonuclease family. Archaeal short subfamily. Homotetramer; although the tetramer contains four active sites, only two participate in the cleavage. Therefore, it should be considered as a dimer of dimers.

It catalyses the reaction pretRNA = a 3'-half-tRNA molecule with a 5'-OH end + a 5'-half-tRNA molecule with a 2',3'-cyclic phosphate end + an intron with a 2',3'-cyclic phosphate and a 5'-hydroxyl terminus.. Functionally, endonuclease that removes tRNA introns. Cleaves pre-tRNA at the 5'- and 3'-splice sites to release the intron. The products are an intron and two tRNA half-molecules bearing 2',3' cyclic phosphate and 5'-OH termini. Recognizes a pseudosymmetric substrate in which 2 bulged loops of 3 bases are separated by a stem of 4 bp. This is tRNA-splicing endonuclease from Pyrobaculum aerophilum (strain ATCC 51768 / DSM 7523 / JCM 9630 / CIP 104966 / NBRC 100827 / IM2).